We begin with the raw amino-acid sequence, 289 residues long: Coiled-coil domain-containing protein 137 (289 aa).

3 disordered regions span residues 1–64, 149–184, and 204–225; these read MAGA…QEIP, EVQA…EKAA, and QPPE…GRRS. Over residues 7–20 the composition is skewed to low complexity; that stretch reads GAAVSRVQAGPGSP. S19 carries the phosphoserine modification. Residues 155 to 197 are a coiled coil; the sequence is KEKSEQKKAKKAFQKRRLDKVRRKKEEKAADRLEQELLRDTVK. The span at 162-177 shows a compositional bias: basic residues; the sequence is KAKKAFQKRRLDKVRR. S233 carries the post-translational modification Phosphoserine. Positions 247–273 form a coiled coil; the sequence is RQRIVEEERERAVQAYRALKQRQQQLH. A disordered region spans residues 265–289; sequence LKQRQQQLHGERPHLTSRKKPEPQL. The segment covering 273 to 289 has biased composition (basic and acidic residues); it reads HGERPHLTSRKKPEPQL.

The protein resides in the chromosome. The protein is Coiled-coil domain-containing protein 137 (CCDC137) of Homo sapiens (Human).